A 97-amino-acid chain; its full sequence is YcgL domain-containing protein Psyr_1564 (97 aa).

A YcgL domain is found at 3–87; the sequence is RICSIYRSPK…AEDDYIEHLP (85 aa).

The protein is YcgL domain-containing protein Psyr_1564 of Pseudomonas syringae pv. syringae (strain B728a).